The sequence spans 231 residues: Phosphoribosylformylglycinamidine synthase subunit PurQ (231 aa).

The 229-residue stretch at 3 to 231 folds into the Glutamine amidotransferase type-1 domain; sequence FGVLIFPGSN…ESMVGAMAKR (229 aa). Cys-86 functions as the Nucleophile in the catalytic mechanism. Active-site residues include His-203 and Glu-205.

Part of the FGAM synthase complex composed of 1 PurL, 1 PurQ and 2 PurS subunits.

Its subcellular location is the cytoplasm. It carries out the reaction N(2)-formyl-N(1)-(5-phospho-beta-D-ribosyl)glycinamide + L-glutamine + ATP + H2O = 2-formamido-N(1)-(5-O-phospho-beta-D-ribosyl)acetamidine + L-glutamate + ADP + phosphate + H(+). The enzyme catalyses L-glutamine + H2O = L-glutamate + NH4(+). It participates in purine metabolism; IMP biosynthesis via de novo pathway; 5-amino-1-(5-phospho-D-ribosyl)imidazole from N(2)-formyl-N(1)-(5-phospho-D-ribosyl)glycinamide: step 1/2. In terms of biological role, part of the phosphoribosylformylglycinamidine synthase complex involved in the purines biosynthetic pathway. Catalyzes the ATP-dependent conversion of formylglycinamide ribonucleotide (FGAR) and glutamine to yield formylglycinamidine ribonucleotide (FGAM) and glutamate. The FGAM synthase complex is composed of three subunits. PurQ produces an ammonia molecule by converting glutamine to glutamate. PurL transfers the ammonia molecule to FGAR to form FGAM in an ATP-dependent manner. PurS interacts with PurQ and PurL and is thought to assist in the transfer of the ammonia molecule from PurQ to PurL. The protein is Phosphoribosylformylglycinamidine synthase subunit PurQ of Koribacter versatilis (strain Ellin345).